A 614-amino-acid polypeptide reads, in one-letter code: Pentatricopeptide repeat-containing protein At1g63080, mitochondrial (614 aa).

The N-terminal 7 residues, 1 to 7 (MSLAKRF), are a transit peptide targeting the mitochondrion. PPR repeat units follow at residues 64–98 (SIVE…GVSH), 99–133 (NLYT…GYGP), 134–168 (SIVT…GYQP), 169–203 (DTVT…GCQP), 204–238 (DLVT…KIEA), 239–273 (DVVI…GIRP), 274–308 (DVFT…KINP), 309–343 (NVVT…SIDP), 344–378 (NIVT…DCLP), 379–413 (DVVT…GLVG), 414–448 (NTVT…GVHP), 449–483 (NIMT…KMEP), 484–518 (DIYT…GVKP), 519–553 (DVIA…GPLP), and 554–588 (DSGT…RFAG).

Belongs to the PPR family. P subfamily.

Its subcellular location is the mitochondrion. In Arabidopsis thaliana (Mouse-ear cress), this protein is Pentatricopeptide repeat-containing protein At1g63080, mitochondrial.